The chain runs to 399 residues: Protein LIGULELESS 1 (399 aa).

The tract at residues 1 to 28 (MMNLSAAANGRDEFPPYVVPSNAAAPPP) is disordered. Low complexity predominate over residues 15 to 24 (PPYVVPSNAA). The segment at 182–260 (PPRCQAEGCK…ADHNRRRRKS (79 aa)) adopts an SBP-type zinc-finger fold. Zn(2+) is bound by residues Cys185, Cys190, Cys207, His210, Cys227, Cys230, His234, and Cys246. Positions 243-259 (KKSCRKRLADHNRRRRK) match the Bipartite nuclear localization signal motif. The segment at 250 to 292 (LADHNRRRRKSKPSDADAGDKKRAHANKAAAAKDKAESSSKNM) is disordered. Over residues 261–270 (KPSDADAGDK) the composition is skewed to basic and acidic residues.

Leaf ligular region, blade and sheath.

The protein resides in the nucleus. Its function is as follows. Involved in the formation of ligules and auricles during leaf organogenesis. This chain is Protein LIGULELESS 1 (LG1), found in Zea mays (Maize).